Reading from the N-terminus, the 1086-residue chain is Isoleucine--tRNA ligase (1086 aa).

The 'HIGH' region motif lies at 53 to 63; it reads PFANGLPHYGH. Residues 624–628 carry the 'KMSKS' region motif; sequence KLSKR. An ATP-binding site is contributed by Lys-627.

It belongs to the class-I aminoacyl-tRNA synthetase family. IleS type 2 subfamily. As to quaternary structure, monomer. Requires Zn(2+) as cofactor.

It localises to the cytoplasm. The catalysed reaction is tRNA(Ile) + L-isoleucine + ATP = L-isoleucyl-tRNA(Ile) + AMP + diphosphate. Catalyzes the attachment of isoleucine to tRNA(Ile). As IleRS can inadvertently accommodate and process structurally similar amino acids such as valine, to avoid such errors it has two additional distinct tRNA(Ile)-dependent editing activities. One activity is designated as 'pretransfer' editing and involves the hydrolysis of activated Val-AMP. The other activity is designated 'posttransfer' editing and involves deacylation of mischarged Val-tRNA(Ile). The protein is Isoleucine--tRNA ligase of Rickettsia typhi (strain ATCC VR-144 / Wilmington).